The sequence spans 749 residues: Phosphate-regulating neutral endopeptidase PHEX (749 aa).

The Cytoplasmic segment spans residues 1–20 (MEAETGSTMETGKGTNRGIR). A helical; Signal-anchor for type II membrane protein transmembrane segment spans residues 21–37 (IALALFIGGTLVLGTLL). Over 38–749 (FLVSQGLLSF…NRGADSCRLW (712 aa)) the chain is Extracellular. The Peptidase M13 domain maps to 53–749 (YCLKPECIEA…NRGADSCRLW (697 aa)). Cysteine 54 and cysteine 59 form a disulfide bridge. N-linked (GlcNAc...) asparagine glycosylation is found at asparagine 71, asparagine 238, asparagine 263, asparagine 290, asparagine 301, asparagine 377, and asparagine 484. 4 disulfide bridges follow: cysteine 77–cysteine 733, cysteine 85–cysteine 693, cysteine 142–cysteine 406, and cysteine 617–cysteine 746. Histidine 580 is a binding site for Zn(2+). Residue glutamate 581 is part of the active site. Histidine 584 and glutamate 642 together coordinate Zn(2+). The Proton donor role is filled by aspartate 646. Asparagine 736 carries N-linked (GlcNAc...) asparagine glycosylation.

It belongs to the peptidase M13 family. As to quaternary structure, interacts with MEPE; the interaction is zinc-dependent (via ASARM motif). The cofactor is Zn(2+). N-glycosylated. Expressed in bone, specifically in the osteoid and in osteocytes. Expressed in teeth, specifically in odontoblasts and ameloblasts. Expressed moderately by macrophages in the liver and has minimal expression in brown adipose tissue. Also expressed in suprabasal layers of the skin.

It is found in the cell membrane. Peptidase that cleaves SIBLING (small integrin-binding ligand, N-linked glycoprotein)-derived ASARM peptides, thus regulating their biological activity. Cleaves ASARM peptides between Ser and Glu or Asp residues. Regulates osteogenic cell differentiation and bone mineralization through the cleavage of the MEPE-derived ASARM peptide. Promotes dentin mineralization and renal phosphate reabsorption by cleaving DMP1- and MEPE-derived ASARM peptides. Inhibits the cleavage of MEPE by CTSB/cathepsin B thus preventing MEPE degradation. The chain is Phosphate-regulating neutral endopeptidase PHEX (Phex) from Mus musculus (Mouse).